We begin with the raw amino-acid sequence, 229 residues long: Putative N-acetylmannosamine-6-phosphate 2-epimerase (229 aa).

This sequence belongs to the NanE family.

It carries out the reaction an N-acyl-D-glucosamine 6-phosphate = an N-acyl-D-mannosamine 6-phosphate. It participates in amino-sugar metabolism; N-acetylneuraminate degradation; D-fructose 6-phosphate from N-acetylneuraminate: step 3/5. In terms of biological role, converts N-acetylmannosamine-6-phosphate (ManNAc-6-P) to N-acetylglucosamine-6-phosphate (GlcNAc-6-P). The polypeptide is Putative N-acetylmannosamine-6-phosphate 2-epimerase (Salmonella arizonae (strain ATCC BAA-731 / CDC346-86 / RSK2980)).